Reading from the N-terminus, the 496-residue chain is MAANCTSSWSLGESCNSPGSEPPQSMPSPATQLGNHDSDPETCHVNFRMFSCPKESDPIQALRKLTELCHLWLRPDLHTKEQILDMLVMEQFMISMPQELQVLVMMNGVQSCKDLEDLLRNNRRPKKWSVVSFLGKEYLMQESDVEMAEAPASVRDDPRHVSSQRTSSVNQMCPEEGQASQELQTLPRVPALFRRQEEDFLLPETTVMKGDPKALRPKPTLEKDLEEDREENPGLTSPEPQLPNSPTGVVGAKEGKEPQKRASVENVDADTPSACVVEREASTHSGSRGDALNLRGLKRSKPDATSISQEEPQGEATPVGNRESPGQAEINPVHSPGPAGPVSHPSGQEVKELLPFACEVCGKRFKYRGKLAVHTRSHTGERLFQCNLCGKRFMQRIGLQFHQRTHTGERPYTCDICQKQFTQKSYLKCHKRSHTGEKPFECKDCKKVFTYKANLKEHQRIHSGEKPHKCSKCPRAFGRPATLRRHQKTHREATSQ.

Polar residues predominate over residues 1–19; that stretch reads MAANCTSSWSLGESCNSPG. A disordered region spans residues 1 to 38; it reads MAANCTSSWSLGESCNSPGSEPPQSMPSPATQLGNHDS. In terms of domain architecture, SCAN box spans 44–126; sequence HVNFRMFSCP…DLLRNNRRPK (83 aa). 2 disordered regions span residues 149–188 and 203–347; these read EAPASVRDDPRHVSSQRTSSVNQMCPEEGQASQELQTLPR and PETT…HPSG. A compositionally biased stretch (polar residues) spans 161-171; the sequence is VSSQRTSSVNQ. A compositionally biased stretch (basic and acidic residues) spans 210 to 223; the sequence is GDPKALRPKPTLEK. The segment covering 234-247 has biased composition (polar residues); that stretch reads GLTSPEPQLPNSPT. Residues 253 to 263 are compositionally biased toward basic and acidic residues; the sequence is KEGKEPQKRAS. 5 consecutive C2H2-type zinc fingers follow at residues 356–378, 384–406, 412–434, 440–462, and 468–490; these read FACEVCGKRFKYRGKLAVHTRSH, FQCNLCGKRFMQRIGLQFHQRTH, YTCDICQKQFTQKSYLKCHKRSH, FECKDCKKVFTYKANLKEHQRIH, and HKCSKCPRAFGRPATLRRHQKTH.

Its subcellular location is the nucleus. In terms of biological role, may be involved in transcriptional regulation. In Homo sapiens (Human), this protein is Zinc finger and SCAN domain-containing protein 5C.